Consider the following 359-residue polypeptide: AA9 family lytic polysaccharide monooxygenase B (359 aa).

Residues 1-18 (MQLFTSFSLLAVASFASA) form the signal peptide. The Cu(2+) site is built by His-19 and His-102. Disulfide bonds link Cys-72–Cys-190 and Cys-113–Cys-117. Asn-150 carries N-linked (GlcNAc...) asparagine glycosylation. O2-binding residues include His-176 and Gln-185. Tyr-187 contacts Cu(2+). Residues 241 to 310 (GGSPGNSAEP…STNINPTSLK (70 aa)) form a disordered region. Residues 245 to 254 (GNSAEPQPQH) are compositionally biased toward polar residues. The segment covering 255–304 (TSTAVSTAKTASTSSLTTSVTITSQAPSNTANPPQSITTTTTPKPQSTNI) has biased composition (low complexity). N-linked (GlcNAc...) asparagine glycosylation is present at Asn-345.

The protein belongs to the polysaccharide monooxygenase AA9 family. The cofactor is Cu(2+).

The protein resides in the secreted. It carries out the reaction [(1-&gt;4)-beta-D-glucosyl]n+m + reduced acceptor + O2 = 4-dehydro-beta-D-glucosyl-[(1-&gt;4)-beta-D-glucosyl]n-1 + [(1-&gt;4)-beta-D-glucosyl]m + acceptor + H2O.. In terms of biological role, lytic polysaccharide monooxygenase (LPMO) that depolymerizes crystalline and amorphous polysaccharides via the oxidation of scissile alpha- or beta-(1-4)-glycosidic bonds, yielding C1 and C4 oxidation products. Catalysis by LPMOs requires the reduction of the active-site copper from Cu(II) to Cu(I) by a reducing agent and H(2)O(2) or O(2) as a cosubstrate. Active on cellulose and on xyloglucan for deconstruction of plant biomass. The protein is AA9 family lytic polysaccharide monooxygenase B of Geotrichum candidum (Oospora lactis).